A 97-amino-acid chain; its full sequence is Putative ankyrin repeat protein RBE_0357 (97 aa).

An ANK repeat occupies 24–54; that stretch reads YGKTALHYAYTKRNIDIIKILLKCPGIKICI.

The protein is Putative ankyrin repeat protein RBE_0357 of Rickettsia bellii (strain RML369-C).